Here is a 423-residue protein sequence, read N- to C-terminus: Glucose-1-phosphate adenylyltransferase (423 aa).

Alpha-D-glucose 1-phosphate-binding positions include Tyr98, Gly163, 178-179, and Ser189; that span reads EK.

Belongs to the bacterial/plant glucose-1-phosphate adenylyltransferase family. As to quaternary structure, homotetramer.

It catalyses the reaction alpha-D-glucose 1-phosphate + ATP + H(+) = ADP-alpha-D-glucose + diphosphate. Its pathway is glycan biosynthesis; glycogen biosynthesis. Functionally, involved in the biosynthesis of ADP-glucose, a building block required for the elongation reactions to produce glycogen. Catalyzes the reaction between ATP and alpha-D-glucose 1-phosphate (G1P) to produce pyrophosphate and ADP-Glc. The sequence is that of Glucose-1-phosphate adenylyltransferase from Thermotoga sp. (strain RQ2).